Here is a 223-residue protein sequence, read N- to C-terminus: Probable iron-sulfur cluster repair protein HI_1677 (223 aa).

It belongs to the RIC family.

Its subcellular location is the cytoplasm. Its function is as follows. Di-iron-containing protein involved in the repair of iron-sulfur clusters. In Haemophilus influenzae (strain ATCC 51907 / DSM 11121 / KW20 / Rd), this protein is Probable iron-sulfur cluster repair protein HI_1677.